A 118-amino-acid chain; its full sequence is Myotrophin (118 aa).

ANK repeat units lie at residues 1–30 (MGDK…DVNR), 34–65 (GGRK…NAAD), and 67–98 (HGIT…TVKG).

The protein belongs to the myotrophin family.

The protein localises to the cytoplasm. It localises to the nucleus. The protein resides in the perinuclear region. Functionally, regulates NF-kappa-B transcription factor activity. Promotes growth of cardiomyocytes, but not cardiomyocyte proliferation. Promotes cardiac muscle hypertrophy. Plays a role in the regulation of the growth of actin filaments. Inhibits the activity of the F-actin-capping protein complex. The chain is Myotrophin (mtpn) from Xenopus tropicalis (Western clawed frog).